A 322-amino-acid polypeptide reads, in one-letter code: Acetyl-coenzyme A carboxylase carboxyl transferase subunit beta (322 aa).

One can recognise a CoA carboxyltransferase N-terminal domain in the interval 24–293 (LWIKCPDTGQ…PAVEEIAASD (270 aa)).

This sequence belongs to the AccD/PCCB family. As to quaternary structure, acetyl-CoA carboxylase is a heterohexamer composed of biotin carboxyl carrier protein (AccB), biotin carboxylase (AccC) and two subunits each of ACCase subunit alpha (AccA) and ACCase subunit beta (AccD).

It localises to the cytoplasm. The enzyme catalyses N(6)-carboxybiotinyl-L-lysyl-[protein] + acetyl-CoA = N(6)-biotinyl-L-lysyl-[protein] + malonyl-CoA. It participates in lipid metabolism; malonyl-CoA biosynthesis; malonyl-CoA from acetyl-CoA: step 1/1. Its function is as follows. Component of the acetyl coenzyme A carboxylase (ACC) complex. Biotin carboxylase (BC) catalyzes the carboxylation of biotin on its carrier protein (BCCP) and then the CO(2) group is transferred by the transcarboxylase to acetyl-CoA to form malonyl-CoA. The sequence is that of Acetyl-coenzyme A carboxylase carboxyl transferase subunit beta from Rhodopseudomonas palustris (strain BisB5).